A 289-amino-acid chain; its full sequence is Pyridoxal kinase PdxY (289 aa).

Substrate contacts are provided by residues Ser-9 and 44 to 45 (TQ). ATP-binding positions include Asp-112, Ala-144, Glu-149, Lys-183, and 210–213 (RPLV). Asp-225 is a substrate binding site.

The protein belongs to the pyridoxine kinase family. PdxY subfamily. Homodimer. Requires Mg(2+) as cofactor.

The enzyme catalyses pyridoxal + ATP = pyridoxal 5'-phosphate + ADP + H(+). Its pathway is cofactor metabolism; pyridoxal 5'-phosphate salvage; pyridoxal 5'-phosphate from pyridoxal: step 1/1. Its function is as follows. Pyridoxal kinase involved in the salvage pathway of pyridoxal 5'-phosphate (PLP). Catalyzes the phosphorylation of pyridoxal to PLP. The protein is Pyridoxal kinase PdxY of Proteus mirabilis.